Consider the following 371-residue polypeptide: MLNEFIAIRRELHQIPETGYKELKTQAYLLDYISKLPSGHLEVKKWRTGILVLVKGTNPEKTIGYRTDIDALPITEETELPFASKHPGNMHACGHDLHMSIALGVLTHFASKPAKDNLLFVFQPAEEGPGGAKPIMESTEFAEWRPDSIYGLHIAPEYKVGEIAIKPGLLFANTSELFISFKGKGGHAAYPHLANDMVVAASAFVGQMQTIISRNIDPMDSAVITIGRIHGGEIQNVIAETAYLDGTIRTLSPETMEIVWTRLKQLAKGWEEAYQCEVEFHPGSDYYQVDNDPVETEEFIHFLEEQYPESYVPARSAMTGEDFGYFLSEIKGFMFWLGVDSEYSLHHAKLNPKEEAIPFAIDVLIHFLESK.

D68 is an active-site residue. Catalysis depends on E127, which acts as the Proton acceptor.

It belongs to the peptidase M20A family. N-acetyldiaminopimelate deacetylase subfamily.

The enzyme catalyses N-acetyl-(2S,6S)-2,6-diaminopimelate + H2O = (2S,6S)-2,6-diaminopimelate + acetate. It participates in amino-acid biosynthesis; L-lysine biosynthesis via DAP pathway; LL-2,6-diaminopimelate from (S)-tetrahydrodipicolinate (acetylase route): step 3/3. Catalyzes the conversion of N-acetyl-diaminopimelate to diaminopimelate and acetate. The protein is N-acetyldiaminopimelate deacetylase of Listeria monocytogenes serovar 1/2a (strain ATCC BAA-679 / EGD-e).